Reading from the N-terminus, the 694-residue chain is Elongation factor G (694 aa).

The tr-type G domain maps to 6-288 (KLYRNIGIAA…GVIEYLPSPT (283 aa)). GTP-binding positions include 15 to 22 (AHVDAGKT), 86 to 90 (DTPGH), and 140 to 143 (NKMD).

It belongs to the TRAFAC class translation factor GTPase superfamily. Classic translation factor GTPase family. EF-G/EF-2 subfamily.

Its subcellular location is the cytoplasm. Its function is as follows. Catalyzes the GTP-dependent ribosomal translocation step during translation elongation. During this step, the ribosome changes from the pre-translocational (PRE) to the post-translocational (POST) state as the newly formed A-site-bound peptidyl-tRNA and P-site-bound deacylated tRNA move to the P and E sites, respectively. Catalyzes the coordinated movement of the two tRNA molecules, the mRNA and conformational changes in the ribosome. The chain is Elongation factor G from Legionella pneumophila subsp. pneumophila (strain Philadelphia 1 / ATCC 33152 / DSM 7513).